The primary structure comprises 263 residues: Acyl-[acyl-carrier-protein]--UDP-N-acetylglucosamine O-acyltransferase (263 aa).

Belongs to the transferase hexapeptide repeat family. LpxA subfamily. In terms of assembly, homotrimer.

The protein localises to the cytoplasm. The enzyme catalyses a (3R)-hydroxyacyl-[ACP] + UDP-N-acetyl-alpha-D-glucosamine = a UDP-3-O-[(3R)-3-hydroxyacyl]-N-acetyl-alpha-D-glucosamine + holo-[ACP]. The protein operates within glycolipid biosynthesis; lipid IV(A) biosynthesis; lipid IV(A) from (3R)-3-hydroxytetradecanoyl-[acyl-carrier-protein] and UDP-N-acetyl-alpha-D-glucosamine: step 1/6. Functionally, involved in the biosynthesis of lipid A, a phosphorylated glycolipid that anchors the lipopolysaccharide to the outer membrane of the cell. This chain is Acyl-[acyl-carrier-protein]--UDP-N-acetylglucosamine O-acyltransferase, found in Campylobacter jejuni (strain RM1221).